The sequence spans 790 residues: LPS-assembly protein LptD (790 aa).

The N-terminal stretch at 1–20 (MRMLRWLILSAFSVAGAVQA) is a signal peptide.

This sequence belongs to the LptD family. In terms of assembly, component of the lipopolysaccharide transport and assembly complex. Interacts with LptE and LptA.

It is found in the cell outer membrane. Together with LptE, is involved in the assembly of lipopolysaccharide (LPS) at the surface of the outer membrane. The protein is LPS-assembly protein LptD of Bordetella pertussis (strain Tohama I / ATCC BAA-589 / NCTC 13251).